Reading from the N-terminus, the 363-residue chain is Protein RecA (363 aa).

An ATP-binding site is contributed by 79-86 (GPESSGKT).

This sequence belongs to the RecA family.

The protein localises to the cytoplasm. Functionally, can catalyze the hydrolysis of ATP in the presence of single-stranded DNA, the ATP-dependent uptake of single-stranded DNA by duplex DNA, and the ATP-dependent hybridization of homologous single-stranded DNAs. It interacts with LexA causing its activation and leading to its autocatalytic cleavage. This chain is Protein RecA, found in Borrelia turicatae (strain 91E135).